We begin with the raw amino-acid sequence, 237 residues long: MIASLDELYHSELFFLPVMDENAWLVGLAIIATFAAEDGAVRMPTELVAPRLSVEEQYCLFVEKLALLETCQHFFIQHKLIAWLNLPPAISDLLLLDSELFSRAARFPFLELAINENYPGLNQGKNNETLANLAMHFPLMLANFGSGEASTKAIFDGLFKRVMLDKNFIQQRAEMISFEPFMHAIVAQISSSCESLMIAGIDTEAMFARAAPLGFSAFQGGLWPPVPVSQLIKLVQR.

The region spanning methionine 1–arginine 237 is the EAL domain.

This sequence belongs to the YdiV family. Interacts with FlhD in the FlhC(2)FlhD(4) heterohexamer, inhibiting its ability to activate transcription.

Acts as an anti-FlhC(2)FlhD(4) factor by binding to FlhD, decreasing its ability to bind DNA, and thus negatively regulates expression of flagellar class II operons, decreasing motility in nutrient-poor medium. Required for resistance to host phagocyte oxidase. In Salmonella choleraesuis (strain SC-B67), this protein is Anti-FlhC(2)FlhD(4) factor YdiV (ydiV).